The primary structure comprises 399 residues: Elongation factor Tu (399 aa).

Residues 10–204 enclose the tr-type G domain; it reads KPHVNIGTIG…AVDASIPEPE (195 aa). The interval 19-26 is G1; the sequence is GHVDHGKT. Position 19–26 (19–26) interacts with GTP; that stretch reads GHVDHGKT. Mg(2+) is bound at residue Thr26. A G2 region spans residues 60–64; the sequence is GITIN. The segment at 81 to 84 is G3; the sequence is DCPG. GTP-binding positions include 81 to 85 and 136 to 139; these read DCPGH and NKCD. Residues 136–139 form a G4 region; the sequence is NKCD. The segment at 174–176 is G5; it reads SGL.

The protein belongs to the TRAFAC class translation factor GTPase superfamily. Classic translation factor GTPase family. EF-Tu/EF-1A subfamily. In terms of assembly, monomer.

Its subcellular location is the cytoplasm. The catalysed reaction is GTP + H2O = GDP + phosphate + H(+). GTP hydrolase that promotes the GTP-dependent binding of aminoacyl-tRNA to the A-site of ribosomes during protein biosynthesis. This Prochlorococcus marinus (strain SARG / CCMP1375 / SS120) protein is Elongation factor Tu.